Consider the following 176-residue polypeptide: MSSKQEPVVLGKIGSSHGIKGWLKITTYTESVEGIFDYSPWLIKEQGEWREVKVTQWRFQGKAVVASLEGVETRDQAQMLTNCEIAVSAEQMQELPEDEFYWRDLIGCEVTNTKGYNMGKVQEIVETGSNDVLLVKANAKDGFGKAERMIPFVTEQFVLEVNLTEKQILVDWDPDF.

Residues 96-176 (PEDEFYWRDL…QILVDWDPDF (81 aa)) enclose the PRC barrel domain.

This sequence belongs to the RimM family. In terms of assembly, binds ribosomal protein uS19.

It is found in the cytoplasm. An accessory protein needed during the final step in the assembly of 30S ribosomal subunit, possibly for assembly of the head region. Essential for efficient processing of 16S rRNA. May be needed both before and after RbfA during the maturation of 16S rRNA. It has affinity for free ribosomal 30S subunits but not for 70S ribosomes. The polypeptide is Ribosome maturation factor RimM (Shewanella woodyi (strain ATCC 51908 / MS32)).